Reading from the N-terminus, the 90-residue chain is Phosphoribosyl-ATP pyrophosphatase (90 aa).

This sequence belongs to the PRA-PH family.

The protein localises to the cytoplasm. The enzyme catalyses 1-(5-phospho-beta-D-ribosyl)-ATP + H2O = 1-(5-phospho-beta-D-ribosyl)-5'-AMP + diphosphate + H(+). It functions in the pathway amino-acid biosynthesis; L-histidine biosynthesis; L-histidine from 5-phospho-alpha-D-ribose 1-diphosphate: step 2/9. This is Phosphoribosyl-ATP pyrophosphatase (hisE) from Streptomyces coelicolor (strain ATCC BAA-471 / A3(2) / M145).